Reading from the N-terminus, the 404-residue chain is Photosynthetic reaction center cytochrome c subunit (404 aa).

Residues Met-1–Gly-22 form the signal peptide. The N-palmitoyl cysteine moiety is linked to residue Cys-23. Cys-23 carries the S-diacylglycerol cysteine lipid modification. The heme site is built by Met-94, Cys-107, Cys-110, His-111, Met-130, His-144, Cys-152, Cys-155, His-156, Met-236, Cys-247, Cys-250, His-251, Cys-307, Cys-310, and His-311. The disordered stretch occupies residues Ala-346–Leu-404.

Component of the photosynthetic reaction center composed of protein subunits L (PufL), M (PufM), H (PuhA) and cytochrome C (PufC). The reaction center interacts with light-harvesting antenna complex LH1. In terms of processing, binds 4 heme groups per subunit.

It localises to the cellular chromatophore membrane. Functionally, the reaction center of purple bacteria contains a tightly bound cytochrome molecule which re-reduces the photo oxidized primary electron donor. This chain is Photosynthetic reaction center cytochrome c subunit, found in Thermochromatium tepidum (Chromatium tepidum).